A 268-amino-acid chain; its full sequence is L-gamma-glutamyl-L-propargylglycine hydroxylase (268 aa).

Fe(2+) is required as a cofactor.

It carries out the reaction L-gamma-glutamyl-L-propargylglycine + 2-oxoglutarate + O2 = L-gamma-glutamyl-(3R)-L-beta-ethynylserine + succinate + CO2. Its pathway is amino-acid metabolism. It functions in the pathway antibiotic biosynthesis. Its function is as follows. Involved in the biosynthesis of terminal alkyne-containing amino acids such as L-beta-ethynylserine, that are produced as antibiotics by S.cattleya. Catalyzes the hydroxylation of the dipeptide L-gamma-glutamyl-L-propargylglycine, leading to L-gamma-glutamyl-L-beta-ethynylserine. Cannot use L-propargylglycine as substrate. This chain is L-gamma-glutamyl-L-propargylglycine hydroxylase, found in Streptantibioticus cattleyicolor (strain ATCC 35852 / DSM 46488 / JCM 4925 / NBRC 14057 / NRRL 8057) (Streptomyces cattleya).